A 59-amino-acid polypeptide reads, in one-letter code: Large ribosomal subunit protein uL30 (59 aa).

Belongs to the universal ribosomal protein uL30 family. As to quaternary structure, part of the 50S ribosomal subunit.

The polypeptide is Large ribosomal subunit protein uL30 (Desulforamulus reducens (strain ATCC BAA-1160 / DSM 100696 / MI-1) (Desulfotomaculum reducens)).